We begin with the raw amino-acid sequence, 962 residues long: Glycine dehydrogenase (decarboxylating) (962 aa).

At Lys709 the chain carries N6-(pyridoxal phosphate)lysine.

This sequence belongs to the GcvP family. In terms of assembly, the glycine cleavage system is composed of four proteins: P, T, L and H. It depends on pyridoxal 5'-phosphate as a cofactor.

The catalysed reaction is N(6)-[(R)-lipoyl]-L-lysyl-[glycine-cleavage complex H protein] + glycine + H(+) = N(6)-[(R)-S(8)-aminomethyldihydrolipoyl]-L-lysyl-[glycine-cleavage complex H protein] + CO2. Functionally, the glycine cleavage system catalyzes the degradation of glycine. The P protein binds the alpha-amino group of glycine through its pyridoxal phosphate cofactor; CO(2) is released and the remaining methylamine moiety is then transferred to the lipoamide cofactor of the H protein. This Shewanella baltica (strain OS195) protein is Glycine dehydrogenase (decarboxylating).